The following is a 508-amino-acid chain: Lysine--tRNA ligase (508 aa).

2 residues coordinate Mg(2+): Glu403 and Glu410.

The protein belongs to the class-II aminoacyl-tRNA synthetase family. As to quaternary structure, homodimer. The cofactor is Mg(2+).

The protein localises to the cytoplasm. It catalyses the reaction tRNA(Lys) + L-lysine + ATP = L-lysyl-tRNA(Lys) + AMP + diphosphate. The chain is Lysine--tRNA ligase from Methanoculleus marisnigri (strain ATCC 35101 / DSM 1498 / JR1).